The sequence spans 239 residues: Leucine rich adaptor protein 1 (239 aa).

LRR repeat units lie at residues 55–83 (LGDK…LVTL) and 93–114 (LLEE…QYSL). A compositionally biased stretch (low complexity) spans 107–116 (LTSSQYSLTG). 2 disordered regions span residues 107-139 (LTSS…TDRL) and 200-219 (KPPG…DESA). 4 positions are modified to phosphoserine: serine 118, serine 126, serine 129, and serine 213.

Forms a tripartite complex with CDC42BPA/CDC42BPB and MYO18A acting as an adapter connecting both. Its binding to CDC42BPA/CDC42BPB results in their activation by abolition of their negative autoregulation. Interacts with CDC42BPA and CDC42BPB.

Its subcellular location is the cytoplasm. In terms of biological role, acts as an activator of the canonical NF-kappa-B pathway and drive the production of pro-inflammatory cytokines. Promotes the antigen (Ag)-presenting and priming function of dendritic cells via the canonical NF-kappa-B pathway. In concert with MYO18A and CDC42BPA/CDC42BPB, is involved in modulating lamellar actomyosin retrograde flow that is crucial to cell protrusion and migration. Activates CDC42BPA/CDC42BPB and targets it to actomyosin through its interaction with MYO18A, leading to MYL9/MLC2 phosphorylation and MYH9/MYH10-dependent actomyosin assembly in the lamella. In Homo sapiens (Human), this protein is Leucine rich adaptor protein 1 (LURAP1).